We begin with the raw amino-acid sequence, 101 residues long: DET1- and DDB1-associated protein 1 (101 aa).

The interval 67 to 101 (NAAKKRDQDQLEIGETSAPPRKIARTDSQEMSEDT) is disordered.

Belongs to the DDA1 family. Component of numerous DCX (DDB1-CUL4-X-box) E3 ubiquitin-protein ligase complexes which consist of a core of DDB1, cullin-4 (CUL4A or CUL4B), DDA1 and RBX1.

It functions in the pathway protein modification; protein ubiquitination. Functions as a component of numerous distinct DCX (DDB1-CUL4-X-box) E3 ubiquitin-protein ligase complexes which mediate the ubiquitination and subsequent proteasomal degradation of target proteins. In the DCX complexes, acts as a scaffolding subunit required to stabilize the complex. This Xenopus tropicalis (Western clawed frog) protein is DET1- and DDB1-associated protein 1.